Here is a 626-residue protein sequence, read N- to C-terminus: Myelin-associated glycoprotein (626 aa).

Residues 1–19 form the signal peptide; sequence MIFLTTLPLFWIMISASRG. The interval 20-325 is interaction with RTN4R and RTN4RL2; it reads GHWGAWMPSS…RTVELSVMYA (306 aa). The Extracellular portion of the chain corresponds to 20 to 516; the sequence is GHWGAWMPSS…HRLMWAKIGP (497 aa). Positions 22–120 constitute an Ig-like V-type domain; that stretch reads WGAWMPSSIS…LGGKYYFRGD (99 aa). Intrachain disulfides connect Cys-37–Cys-165, Cys-42–Cys-100, and Cys-159–Cys-217. 65-67 provides a ligand contact to a ganglioside GT1b (d18:1(4E)); the sequence is YPK. Residue Asn-99 is glycosylated (N-linked (GlcNAc...) asparagine). Residues Arg-118 and 124-128 each bind a ganglioside GT1b (d18:1(4E)); that span reads YNQYT. Ig-like C2-type domains follow at residues 139–237, 241–325, 327–412, and 413–508; these read NTPN…LDVK, VIVE…VMYA, WKPT…VEFA, and PIIL…GAHR. N-linked (GlcNAc...) asparagine glycans are attached at residues Asn-223 and Asn-246. The cysteines at positions 261 and 305 are disulfide-linked. Asn-315 and Asn-332 each carry an N-linked (GlcNAc...) asparagine glycan. A disulfide bond links Cys-347 and Cys-392. The N-linked (GlcNAc...) asparagine glycan is linked to Asn-406. 2 disulfide bridges follow: Cys-421–Cys-430 and Cys-432–Cys-488. N-linked (GlcNAc...) asparagine glycans are attached at residues Asn-450 and Asn-454. A helical transmembrane segment spans residues 517–536; sequence VGAVVAFAILIAIVCYITQT. Cys-531 carries S-palmitoyl cysteine lipidation. The Cytoplasmic portion of the chain corresponds to 537–626; it reads RRKKNVTESP…LAEYAEIRVK (90 aa). Residues Ser-545, Ser-547, and Ser-549 each carry the phosphoserine modification. Residues 577 to 626 are required for normal axon myelination in the central nervous system; the sequence is LGSERRLLGLRGEPPELDLSYSHSDLGKRPTKDSYTLTEELAEYAEIRVK. Residues 581-608 form a disordered region; the sequence is RRLLGLRGEPPELDLSYSHSDLGKRPTK.

This sequence belongs to the immunoglobulin superfamily. SIGLEC (sialic acid binding Ig-like lectin) family. Monomer and homodimer. Interacts (via the first three N-terminal Ig-like domains) with RTN4R and RTN4RL2. Interacts with isoform 2 of BSG. In terms of processing, N-glycosylated. Phosphorylated on tyrosine residues. Post-translationally, ubiquitinated, leading to proteasomal degradation. In terms of tissue distribution, detected in myelin. Detected in olfactory bulb and throughout the brain (at protein level). Detected in brain.

The protein resides in the cell membrane. It localises to the membrane raft. Its function is as follows. Adhesion molecule that mediates interactions between myelinating cells and neurons by binding to neuronal sialic acid-containing gangliosides and to the glycoproteins RTN4R and RTN4RL2. Not required for initial myelination, but seems to play a role in the maintenance of normal axon myelination. Protects motoneurons against apoptosis, also after injury; protection against apoptosis is probably mediated via interaction with neuronal RTN4R and RTN4RL2. Required to prevent degeneration of myelinated axons in adults; this probably depends on binding to gangliosides on the axon cell membrane. Negative regulator of neurite outgrowth; in dorsal root ganglion neurons the inhibition is mediated primarily via binding to neuronal RTN4R or RTN4RL2 and to a lesser degree via binding to neuronal gangliosides. In cerebellar granule cells the inhibition is mediated primarily via binding to neuronal gangliosides. In sensory neurons, inhibition of neurite extension depends only partially on RTN4R, RTN4RL2 and gangliosides. Inhibits axon longitudinal growth. Inhibits axon outgrowth by binding to RTN4R. Preferentially binds to alpha-2,3-linked sialic acid. Binds ganglioside Gt1b. The protein is Myelin-associated glycoprotein (Mag) of Rattus norvegicus (Rat).